A 377-amino-acid polypeptide reads, in one-letter code: Flagellin C (377 aa).

2 coiled-coil regions span residues 103–129 and 301–340; these read SNSKADRVAIQEEITALNDELNRVAET and VDSHRAELGAFQNRFNHAINNLDNINENVNASKSRIKDTD.

This sequence belongs to the bacterial flagellin family. In terms of assembly, heteromer of multiple flagellin subunits including FlaA, FlaB, FlaC, FlaD and FlaE.

It localises to the secreted. It is found in the bacterial flagellum. Flagellin is the subunit protein which polymerizes to form the filaments of bacterial flagella. FlaC is not essential for flagellar synthesis and motility. The sequence is that of Flagellin C (flaC) from Vibrio cholerae serotype O1 (strain ATCC 39541 / Classical Ogawa 395 / O395).